We begin with the raw amino-acid sequence, 510 residues long: NAD(P)H-quinone oxidoreductase subunit 2 A, chloroplastic (510 aa).

13 helical membrane-spanning segments follow: residues 26–46, 57–77, 99–119, 124–144, 149–169, 183–203, 227–247, 295–315, 323–342, 354–374, 395–415, 418–438, and 484–504; these read LFDGSFIFPEGILIFGLILLL, IPWFYFISSISLVMSITALLF, IFQFLILLCSTLCIPLSVEYI, MAITEFLLFVLTATLGGMFLC, LITIFVAPECFSLCSYLLSGY, YLLMGGASSSILVHGFSWLYG, PGISIALIFITVGIGFKLSPA, WHPLLEILAILSMILGNLIAI, MLAYSSIGQIGYVIIGIIVG, YMLFYISMNLGTFACIVLFGL, ALSLALCLLSLGGLPPLAGFF, LHLFWCGWQAGLYFLVSIGLF, and MIVCVIASTIPGISMNPIIAI.

Belongs to the complex I subunit 2 family. As to quaternary structure, NDH is composed of at least 16 different subunits, 5 of which are encoded in the nucleus.

The protein localises to the plastid. Its subcellular location is the chloroplast thylakoid membrane. It catalyses the reaction a plastoquinone + NADH + (n+1) H(+)(in) = a plastoquinol + NAD(+) + n H(+)(out). It carries out the reaction a plastoquinone + NADPH + (n+1) H(+)(in) = a plastoquinol + NADP(+) + n H(+)(out). In terms of biological role, NDH shuttles electrons from NAD(P)H:plastoquinone, via FMN and iron-sulfur (Fe-S) centers, to quinones in the photosynthetic chain and possibly in a chloroplast respiratory chain. The immediate electron acceptor for the enzyme in this species is believed to be plastoquinone. Couples the redox reaction to proton translocation, and thus conserves the redox energy in a proton gradient. This Oenothera biennis (German evening primrose) protein is NAD(P)H-quinone oxidoreductase subunit 2 A, chloroplastic.